A 114-amino-acid chain; its full sequence is T cell receptor alpha variable 3 (114 aa).

Residues 1–20 (MASAPISMLAMLFTLSGLRA) form the signal peptide. Residues 21–114 (QSVAQPEDQV…SALYFCAVRD (94 aa)) form the Ig-like domain. A disulfide bridge connects residues C42 and C110. A glycan (N-linked (GlcNAc...) asparagine) is linked at N87.

As to quaternary structure, alpha-beta TR is a heterodimer composed of an alpha and beta chain; disulfide-linked. The alpha-beta TR is associated with the transmembrane signaling CD3 coreceptor proteins to form the TR-CD3 (TcR or TCR). The assembly of alpha-beta TR heterodimers with CD3 occurs in the endoplasmic reticulum where a single alpha-beta TR heterodimer associates with one CD3D-CD3E heterodimer, one CD3G-CD3E heterodimer and one CD247 homodimer forming a stable octameric structure. CD3D-CD3E and CD3G-CD3E heterodimers preferentially associate with TR alpha and TR beta chains, respectively. The association of the CD247 homodimer is the last step of TcR assembly in the endoplasmic reticulum and is required for transport to the cell surface.

It is found in the cell membrane. Its function is as follows. V region of the variable domain of T cell receptor (TR) alpha chain that participates in the antigen recognition. Alpha-beta T cell receptors are antigen specific receptors which are essential to the immune response and are present on the cell surface of T lymphocytes. Recognize peptide-major histocompatibility (MH) (pMH) complexes that are displayed by antigen presenting cells (APC), a prerequisite for efficient T cell adaptive immunity against pathogens. Binding of alpha-beta TR to pMH complex initiates TR-CD3 clustering on the cell surface and intracellular activation of LCK that phosphorylates the ITAM motifs of CD3G, CD3D, CD3E and CD247 enabling the recruitment of ZAP70. In turn ZAP70 phosphorylates LAT, which recruits numerous signaling molecules to form the LAT signalosome. The LAT signalosome propagates signal branching to three major signaling pathways, the calcium, the mitogen-activated protein kinase (MAPK) kinase and the nuclear factor NF-kappa-B (NF-kB) pathways, leading to the mobilization of transcription factors that are critical for gene expression and essential for T cell growth and differentiation. The T cell repertoire is generated in the thymus, by V-(D)-J rearrangement. This repertoire is then shaped by intrathymic selection events to generate a peripheral T cell pool of self-MH restricted, non-autoaggressive T cells. Post-thymic interaction of alpha-beta TR with the pMH complexes shapes TR structural and functional avidity. This chain is T cell receptor alpha variable 3, found in Homo sapiens (Human).